Consider the following 121-residue polypeptide: Protein SNORC (121 aa).

An N-terminal signal peptide occupies residues 1–24 (MASCLALRMALLLVSGVLAPAVLT). Residues 25-92 (DDVPQEPVPT…QGGGSLGPGA (68 aa)) are Extracellular-facing. Positions 28–84 (PQEPVPTLWNEPAELPSGEGPVESTSPGREPVDTGPPAPTVAPGPEDSTAQERLDQG) are disordered. The helical transmembrane segment at 93–113 (IAAIVIAALLATCVVLALVVV) threads the bilayer. The Cytoplasmic segment spans residues 114–121 (ALRKFSAS).

As to quaternary structure, interacts (via the extracellular domain) with FGF2. As to expression, expressed in cartilage.

The protein resides in the membrane. Its subcellular location is the cytoplasm. The protein localises to the secreted. It localises to the extracellular space. It is found in the extracellular matrix. Its function is as follows. Plays a role in the regulation of chondrocyte maturation and postnatal endochondral ossification. May inhibit cell growth stimulation induced by FGF2. The protein is Protein SNORC of Homo sapiens (Human).